Reading from the N-terminus, the 358-residue chain is Probable branched-chain-amino-acid aminotransferase (358 aa).

Lysine 196 is modified (N6-(pyridoxal phosphate)lysine).

The protein belongs to the class-IV pyridoxal-phosphate-dependent aminotransferase family. The cofactor is pyridoxal 5'-phosphate.

The enzyme catalyses L-leucine + 2-oxoglutarate = 4-methyl-2-oxopentanoate + L-glutamate. The catalysed reaction is L-isoleucine + 2-oxoglutarate = (S)-3-methyl-2-oxopentanoate + L-glutamate. It carries out the reaction L-valine + 2-oxoglutarate = 3-methyl-2-oxobutanoate + L-glutamate. It participates in amino-acid biosynthesis; L-isoleucine biosynthesis; L-isoleucine from 2-oxobutanoate: step 4/4. The protein operates within amino-acid biosynthesis; L-leucine biosynthesis; L-leucine from 3-methyl-2-oxobutanoate: step 4/4. It functions in the pathway amino-acid biosynthesis; L-valine biosynthesis; L-valine from pyruvate: step 4/4. Functionally, acts on leucine, isoleucine and valine. In Staphylococcus aureus (strain MRSA252), this protein is Probable branched-chain-amino-acid aminotransferase (ilvE).